Consider the following 222-residue polypeptide: Octanoyltransferase (222 aa).

Residues Ala-34–Val-214 form the BPL/LPL catalytic domain. Residues Arg-72 to His-79, Ala-144 to Gly-146, and Gly-157 to Ala-159 contribute to the substrate site. Cys-175 acts as the Acyl-thioester intermediate in catalysis.

It belongs to the LipB family.

The protein localises to the cytoplasm. It carries out the reaction octanoyl-[ACP] + L-lysyl-[protein] = N(6)-octanoyl-L-lysyl-[protein] + holo-[ACP] + H(+). It functions in the pathway protein modification; protein lipoylation via endogenous pathway; protein N(6)-(lipoyl)lysine from octanoyl-[acyl-carrier-protein]: step 1/2. Catalyzes the transfer of endogenously produced octanoic acid from octanoyl-acyl-carrier-protein onto the lipoyl domains of lipoate-dependent enzymes. Lipoyl-ACP can also act as a substrate although octanoyl-ACP is likely to be the physiological substrate. This chain is Octanoyltransferase, found in Arthrobacter sp. (strain FB24).